The following is a 53-amino-acid chain: ATP synthase protein 8 (53 aa).

Residues 9 to 29 traverse the membrane as a helical segment; that stretch reads WITSMLMFWISVSILFSTLWW.

The protein belongs to the ATPase protein 8 family. F-type ATPases have 2 components, CF(1) - the catalytic core - and CF(0) - the membrane proton channel.

The protein localises to the mitochondrion membrane. In terms of biological role, mitochondrial membrane ATP synthase (F(1)F(0) ATP synthase or Complex V) produces ATP from ADP in the presence of a proton gradient across the membrane which is generated by electron transport complexes of the respiratory chain. F-type ATPases consist of two structural domains, F(1) - containing the extramembraneous catalytic core and F(0) - containing the membrane proton channel, linked together by a central stalk and a peripheral stalk. During catalysis, ATP synthesis in the catalytic domain of F(1) is coupled via a rotary mechanism of the central stalk subunits to proton translocation. Part of the complex F(0) domain. Minor subunit located with subunit a in the membrane. In Lumbricus terrestris (Common earthworm), this protein is ATP synthase protein 8 (MT-ATP8).